The following is a 112-amino-acid chain: MDVYRIKKNAEFRAVYKRGKSFSNNLLVLYVYMNRKNVNRLGVSVSKKVGKSVVRNRIKRLIKESFRLNSDYMKVENGYDLVFIARKASNGKSYVEINNSVKNLIKKAGLYK.

It belongs to the RnpA family. Consists of a catalytic RNA component (M1 or rnpB) and a protein subunit.

It carries out the reaction Endonucleolytic cleavage of RNA, removing 5'-extranucleotides from tRNA precursor.. RNaseP catalyzes the removal of the 5'-leader sequence from pre-tRNA to produce the mature 5'-terminus. It can also cleave other RNA substrates such as 4.5S RNA. The protein component plays an auxiliary but essential role in vivo by binding to the 5'-leader sequence and broadening the substrate specificity of the ribozyme. This chain is Ribonuclease P protein component, found in Clostridium kluyveri (strain ATCC 8527 / DSM 555 / NBRC 12016 / NCIMB 10680 / K1).